The sequence spans 55 residues: Large ribosomal subunit protein bL33 (55 aa).

Belongs to the bacterial ribosomal protein bL33 family.

The chain is Large ribosomal subunit protein bL33 from Mycobacterium leprae (strain Br4923).